The following is a 326-amino-acid chain: Polyprenal reductase (326 aa).

The next 5 membrane-spanning stretches (helical) occupy residues 26–46, 84–104, 167–187, 212–232, and 256–276; these read MMFG…TFVE, HFYT…VSTV, INLS…IALL, ILYL…NMIL, and LFNL…FCIA.

It belongs to the steroid 5-alpha reductase family. Polyprenal reductase subfamily.

Its subcellular location is the endoplasmic reticulum membrane. The enzyme catalyses a di-trans,poly-cis-dolichal + NADP(+) = a di-trans,poly-cis-polyprenal + NADPH + H(+). It participates in protein modification; protein glycosylation. Functionally, plays a key role in early steps of protein N-linked glycosylation by being involved in the conversion of polyprenol into dolichol. Acts as a polyprenal reductase that mediates the reduction of polyprenal into dolichal in a NADP-dependent mechanism. Dolichols are required for the synthesis of dolichol-linked monosaccharides and the oligosaccharide precursor used for N-glycosylation. The polypeptide is Polyprenal reductase (Drosophila melanogaster (Fruit fly)).